Reading from the N-terminus, the 209-residue chain is Thymidylate kinase (209 aa).

Residue Gly-11–Thr-18 participates in ATP binding.

This sequence belongs to the thymidylate kinase family.

It catalyses the reaction dTMP + ATP = dTDP + ADP. Functionally, phosphorylation of dTMP to form dTDP in both de novo and salvage pathways of dTTP synthesis. The sequence is that of Thymidylate kinase (tmk) from Pasteurella multocida (strain Pm70).